The chain runs to 377 residues: Chaperone protein DnaJ (377 aa).

Positions 5-70 constitute a J domain; it reads DFYEVLGVER…SKRAAYDQYG (66 aa). A CR-type zinc finger spans residues 136 to 214; that stretch reads GTTVTIRVPT…CHGQGRVEEQ (79 aa). Zn(2+) contacts are provided by Cys-149, Cys-152, Cys-166, Cys-169, Cys-188, Cys-191, Cys-202, and Cys-205. CXXCXGXG motif repeat units lie at residues 149-156, 166-173, 188-195, and 202-209; these read CKTCNGSG, CTTCGGIG, CPRCHGTG, and CGSCHGQG.

This sequence belongs to the DnaJ family. In terms of assembly, homodimer. Zn(2+) serves as cofactor.

It localises to the cytoplasm. Functionally, participates actively in the response to hyperosmotic and heat shock by preventing the aggregation of stress-denatured proteins and by disaggregating proteins, also in an autonomous, DnaK-independent fashion. Unfolded proteins bind initially to DnaJ; upon interaction with the DnaJ-bound protein, DnaK hydrolyzes its bound ATP, resulting in the formation of a stable complex. GrpE releases ADP from DnaK; ATP binding to DnaK triggers the release of the substrate protein, thus completing the reaction cycle. Several rounds of ATP-dependent interactions between DnaJ, DnaK and GrpE are required for fully efficient folding. Also involved, together with DnaK and GrpE, in the DNA replication of plasmids through activation of initiation proteins. This chain is Chaperone protein DnaJ, found in Pseudomonas aeruginosa (strain LESB58).